The primary structure comprises 497 residues: Hexokinase-1 (497 aa).

Residues 4–24 (ATVGAAVIGAATVCAVAALIV) traverse the membrane as a helical segment. The Hexokinase domain occupies 35–487 (ARAMAILREF…SGIGAALLAA (453 aa)). The tract at residues 90–228 (TGDEAGVFYA…GVDMRVSALV (139 aa)) is hexokinase small subdomain. 3 residues coordinate ADP: Gly104, Thr105, and Asn106. Residues Thr194, Lys195, Asn229, and Asp230 each contribute to the D-glucose site. Residues 229–476 (NDTVGTLAGG…TSIVFEHSND (248 aa)) form a hexokinase large subdomain region. Position 253 (Thr253) interacts with ADP. 3 residues coordinate D-glucose: Asn256, Glu284, and Glu315. ADP is bound at residue Gly441.

The protein belongs to the hexokinase family.

It is found in the plastid. Its subcellular location is the chloroplast outer membrane. The enzyme catalyses a D-hexose + ATP = a D-hexose 6-phosphate + ADP + H(+). It catalyses the reaction D-fructose + ATP = D-fructose 6-phosphate + ADP + H(+). The catalysed reaction is D-glucose + ATP = D-glucose 6-phosphate + ADP + H(+). It participates in carbohydrate metabolism; hexose metabolism. Its pathway is carbohydrate degradation; glycolysis; D-glyceraldehyde 3-phosphate and glycerone phosphate from D-glucose: step 1/4. In terms of biological role, fructose and glucose phosphorylating enzyme. The chain is Hexokinase-1 (HXK1) from Nicotiana tabacum (Common tobacco).